A 627-amino-acid chain; its full sequence is 1-deoxy-D-xylulose-5-phosphate synthase (627 aa).

Residues His72 and 113 to 115 (GHS) contribute to the thiamine diphosphate site. A Mg(2+)-binding site is contributed by Asp144. Residues 145–146 (GA), Asn173, Tyr283, and Glu366 each bind thiamine diphosphate. Position 173 (Asn173) interacts with Mg(2+).

The protein belongs to the transketolase family. DXPS subfamily. Homodimer. Mg(2+) is required as a cofactor. Thiamine diphosphate serves as cofactor.

The enzyme catalyses D-glyceraldehyde 3-phosphate + pyruvate + H(+) = 1-deoxy-D-xylulose 5-phosphate + CO2. It functions in the pathway metabolic intermediate biosynthesis; 1-deoxy-D-xylulose 5-phosphate biosynthesis; 1-deoxy-D-xylulose 5-phosphate from D-glyceraldehyde 3-phosphate and pyruvate: step 1/1. In terms of biological role, catalyzes the acyloin condensation reaction between C atoms 2 and 3 of pyruvate and glyceraldehyde 3-phosphate to yield 1-deoxy-D-xylulose-5-phosphate (DXP). The polypeptide is 1-deoxy-D-xylulose-5-phosphate synthase (Macrococcus caseolyticus (strain JCSC5402) (Macrococcoides caseolyticum)).